The following is a 653-amino-acid chain: MEPSGSEQLFEDPDPGGKSQDAEARKQTESEQKLSKMTHNALENINVIGQGLKHLFQHQRRRSSVSPHDVQQIQADPEPEMDLESQNACAEIDGVPTHPTALNRVLQQIRVPPKMKRGTSLHSRRGKPEAPKGSPQINRKSGQEMTAVMQSGRPRSSSTTDAPTSSAMMEIACAAAAAAAACLPGEEGTAERIERLEVSSLAQTSSAVASSTDGSIHTDSVDGTPDPQRTKAAIAHLQQKILKLTEQIKIAQTARDDNVAEYLKLANSADKQQAARIKQVFEKKNQKSAQTILQLQKKLEHYHRKLREVEQNGIPRQPKDVFRDMHQGLKDVGAKVTGFSEGVVDSVKGGFSSFSQATHSAAGAVVSKPREIASLIRNKFGSADNIPNLKDSLEEGQVDDAGKALGVISNFQSSPKYGSEEDCSSATSGSVGANSTTGGIAVGASSSKTNTLDMQSSGFDALLHEIQEIRETQARLEESFETLKEHYQRDYSLIMQTLQEERYRCERLEEQLNDLTELHQNEILNLKQELASMEEKIAYQSYERARDIQEALEACQTRISKMELQQQQQQVVQLEGLENATARNLLGKLINILLAVMAVLLVFVSTVANCVVPLMKTRNRTFSTLFLVVFIAFLWKHWDALFSYVERFFSSPR.

The residue at position 1 (Met1) is an N-acetylmethionine. Disordered regions lie at residues 1–35 (MEPS…QKLS), 58–78 (HQRR…ADPE), 112–165 (PPKM…APTS), and 204–227 (TSSA…TPDP). Residues 1–591 (MEPSGSEQLF…ARNLLGKLIN (591 aa)) are Cytoplasmic-facing. A compositionally biased stretch (basic and acidic residues) spans 20-34 (QDAEARKQTESEQKL). The span at 64 to 74 (SVSPHDVQQIQ) shows a compositional bias: polar residues. The segment covering 113–125 (PKMKRGTSLHSRR) has biased composition (basic residues). Residues 135–144 (PQINRKSGQE) are compositionally biased toward polar residues. Residues 153 to 165 (RPRSSSTTDAPTS) show a composition bias toward low complexity. Over residues 204–218 (TSSAVASSTDGSIHT) the composition is skewed to polar residues. Positions 228 to 313 (QRTKAAIAHL…RKLREVEQNG (86 aa)) form a coiled coil. Phosphoserine is present on residues Ser382 and Ser414. The disordered stretch occupies residues 415-437 (PKYGSEEDCSSATSGSVGANSTT). Residues 424 to 437 (SSATSGSVGANSTT) are compositionally biased toward polar residues. Residues 458–576 (GFDALLHEIQ…QQQQVVQLEG (119 aa)) are a coiled coil. 2 helical membrane passes run 592 to 612 (ILLA…NCVV) and 625 to 645 (LFLV…FSYV). Topologically, residues 646–653 (ERFFSSPR) are cytoplasmic.

The protein belongs to the TEX28 family. In terms of assembly, may form homodimers and heterodimers with TMCC2 or TMCC3 via the coiled-coil domains. Interacts with ribosomal proteins RPL4 and RPS6.

It localises to the endoplasmic reticulum membrane. Endoplasmic reticulum membrane protein that promotes endoplasmic reticulum-associated endosome fission. Localizes to contact sites between the endoplasmic reticulum and endosomes and acts by promoting recruitment of the endoplasmic reticulum to endosome tubules for fission. Endosome membrane fission of early and late endosomes is essential to separate regions destined for lysosomal degradation from carriers to be recycled to the plasma membrane. This is Transmembrane and coiled-coil domains protein 1 from Homo sapiens (Human).